Reading from the N-terminus, the 370-residue chain is Succinoglycan biosynthesis protein ExoH (370 aa).

The next 10 helical transmembrane spans lie at 14–34 (ILLI…WSPF), 46–66 (VFLG…ISGY), 88–108 (TVLL…YAIQ), 144–164 (LYFL…ALLV), 170–190 (VTLL…IFLK), 193–213 (ILFG…IKML), 216–236 (FAAP…VGLY), 244–264 (LWLD…SWAI), 282–302 (GLSF…WMIW), and 307–327 (LSYY…ILVA). The segment at 350–370 (AKRMATQPPQGAQAGYSPQQR) is disordered.

The protein belongs to the acyltransferase 3 family.

It is found in the cell membrane. It functions in the pathway glycan metabolism; exopolysaccharide biosynthesis. Required for the succinyl modification of the seventh sugar (glucose) of the octasaccharide subunit of succinoglycan (EPS I). The sequence is that of Succinoglycan biosynthesis protein ExoH (exoH) from Rhizobium meliloti (strain 1021) (Ensifer meliloti).